A 429-amino-acid chain; its full sequence is Zygotic gap protein knirps (429 aa).

Residues 2 to 78 (NQTCKVCGEP…VGMSKGGSRY (77 aa)) constitute a DNA-binding region (nuclear receptor). 2 consecutive NR C4-type zinc fingers follow at residues 5-25 (CKVCGEPAAGFHFGAFTCEGC) and 42-66 (CKNEGKCIIDKKNRTTCKACRLRKC). A compositionally biased stretch (low complexity) spans 112–126 (SVGGAPSASSPVGSP). 4 disordered regions span residues 112-148 (SVGGAPSASSPVGSPHTPGFGDMAAHLHHHHQQQQQQ), 223-250 (QSVDSVESQNRFSPASQPPVVQPTSSAR), 338-357 (TSRSSVHSFNDSGSEDQEVE), and 375-397 (SSSSSSHSAAHSPNTTTAHAEVK). Polar residues-rich tracts occupy residues 225–237 (VDSVESQNRFSPA) and 338–349 (TSRSSVHSFNDS). Positions 375 to 393 (SSSSSSHSAAHSPNTTTAH) are enriched in low complexity.

This sequence belongs to the nuclear hormone receptor family. NR0 subfamily.

It localises to the nucleus. Transcriptional repressor. Binds to multiple sites in the eve stripe 3 enhancer element. Plays an essential role in the segmentation process both by refining the expression patterns of gap genes and by establishing pair-rules stripes of gene expression. In Drosophila melanogaster (Fruit fly), this protein is Zygotic gap protein knirps (kni).